The following is a 391-amino-acid chain: Ribosomal RNA small subunit methyltransferase H (391 aa).

Residues 1–23 (MDVDVQDDVQGRAGEGAEERAHD) are disordered. S-adenosyl-L-methionine-binding positions include 59 to 61 (GGH), aspartate 78, leucine 112, aspartate 126, and glutamine 133. Residues 284 to 391 (SSSSAPPDLP…EPGATVERTP (108 aa)) form a disordered region. The segment covering 368 to 380 (RTQEFETHPHLEP) has biased composition (basic and acidic residues).

This sequence belongs to the methyltransferase superfamily. RsmH family.

Its subcellular location is the cytoplasm. The catalysed reaction is cytidine(1402) in 16S rRNA + S-adenosyl-L-methionine = N(4)-methylcytidine(1402) in 16S rRNA + S-adenosyl-L-homocysteine + H(+). Specifically methylates the N4 position of cytidine in position 1402 (C1402) of 16S rRNA. The protein is Ribosomal RNA small subunit methyltransferase H of Kineococcus radiotolerans (strain ATCC BAA-149 / DSM 14245 / SRS30216).